We begin with the raw amino-acid sequence, 228 residues long: uncharacterized protein (228 aa).

To E.coli YbfG.

This is an uncharacterized protein from Haemophilus influenzae (strain ATCC 51907 / DSM 11121 / KW20 / Rd).